A 673-amino-acid chain; its full sequence is Translation factor GUF1 homolog, mitochondrial (673 aa).

Positions 68–260 (ERIRNFSIIA…AVIERIPSPP (193 aa)) constitute a tr-type G domain. GTP-binding positions include 77-84 (AHVDHGKS), 153-157 (DTPGH), and 207-210 (NKID).

Belongs to the TRAFAC class translation factor GTPase superfamily. Classic translation factor GTPase family. LepA subfamily.

The protein resides in the mitochondrion inner membrane. The enzyme catalyses GTP + H2O = GDP + phosphate + H(+). Promotes mitochondrial protein synthesis. May act as a fidelity factor of the translation reaction, by catalyzing a one-codon backward translocation of tRNAs on improperly translocated ribosomes. Binds to mitochondrial ribosomes in a GTP-dependent manner. The polypeptide is Translation factor GUF1 homolog, mitochondrial (Ricinus communis (Castor bean)).